We begin with the raw amino-acid sequence, 201 residues long: Holliday junction branch migration complex subunit RuvA (201 aa).

Residues methionine 1 to alanine 63 are domain I. The domain II stretch occupies residues aspartate 64–alanine 139. Positions alanine 139 to proline 143 are flexible linker. Positions valine 144–arginine 201 are domain III.

It belongs to the RuvA family. Homotetramer. Forms an RuvA(8)-RuvB(12)-Holliday junction (HJ) complex. HJ DNA is sandwiched between 2 RuvA tetramers; dsDNA enters through RuvA and exits via RuvB. An RuvB hexamer assembles on each DNA strand where it exits the tetramer. Each RuvB hexamer is contacted by two RuvA subunits (via domain III) on 2 adjacent RuvB subunits; this complex drives branch migration. In the full resolvosome a probable DNA-RuvA(4)-RuvB(12)-RuvC(2) complex forms which resolves the HJ.

It is found in the cytoplasm. The RuvA-RuvB-RuvC complex processes Holliday junction (HJ) DNA during genetic recombination and DNA repair, while the RuvA-RuvB complex plays an important role in the rescue of blocked DNA replication forks via replication fork reversal (RFR). RuvA specifically binds to HJ cruciform DNA, conferring on it an open structure. The RuvB hexamer acts as an ATP-dependent pump, pulling dsDNA into and through the RuvAB complex. HJ branch migration allows RuvC to scan DNA until it finds its consensus sequence, where it cleaves and resolves the cruciform DNA. The sequence is that of Holliday junction branch migration complex subunit RuvA from Streptomyces coelicolor (strain ATCC BAA-471 / A3(2) / M145).